A 564-amino-acid polypeptide reads, in one-letter code: Glutamyl-tRNA(Gln) amidotransferase subunit B, mitochondrial (564 aa).

The transit peptide at 1 to 88 (MIRQCVSHRG…DTDAKLFSRA (88 aa)) directs the protein to the mitochondrion. The tract at residues 26 to 63 (PFHHPSPRPLGRKNWSTSDEAKSKRAAMRKGGAPPPEH) is disordered.

The protein belongs to the GatB/GatE family. GatB subfamily. In terms of assembly, subunit of the heterotrimeric GatCAB amidotransferase (AdT) complex, composed of A, B and C subunits.

It localises to the mitochondrion. It carries out the reaction L-glutamyl-tRNA(Gln) + L-glutamine + ATP + H2O = L-glutaminyl-tRNA(Gln) + L-glutamate + ADP + phosphate + H(+). Functionally, allows the formation of correctly charged Gln-tRNA(Gln) through the transamidation of misacylated Glu-tRNA(Gln) in the mitochondria. The reaction takes place in the presence of glutamine and ATP through an activated gamma-phospho-Glu-tRNA(Gln). This is Glutamyl-tRNA(Gln) amidotransferase subunit B, mitochondrial from Ajellomyces capsulatus (strain G186AR / H82 / ATCC MYA-2454 / RMSCC 2432) (Darling's disease fungus).